Consider the following 361-residue polypeptide: Beta-hexosaminidase (361 aa).

Residues aspartate 69, arginine 77, arginine 144, and 174-175 (KH) contribute to the substrate site. Residue histidine 187 is the Proton donor/acceptor of the active site. The active-site Nucleophile is aspartate 258.

Belongs to the glycosyl hydrolase 3 family. NagZ subfamily.

It is found in the cytoplasm. The catalysed reaction is Hydrolysis of terminal non-reducing N-acetyl-D-hexosamine residues in N-acetyl-beta-D-hexosaminides.. It functions in the pathway cell wall biogenesis; peptidoglycan recycling. Plays a role in peptidoglycan recycling by cleaving the terminal beta-1,4-linked N-acetylglucosamine (GlcNAc) from peptide-linked peptidoglycan fragments, giving rise to free GlcNAc, anhydro-N-acetylmuramic acid and anhydro-N-acetylmuramic acid-linked peptides. In Neisseria meningitidis serogroup A / serotype 4A (strain DSM 15465 / Z2491), this protein is Beta-hexosaminidase.